The chain runs to 284 residues: MEMO1 family protein MmarC6_1286 (284 aa).

Belongs to the MEMO1 family.

In Methanococcus maripaludis (strain C6 / ATCC BAA-1332), this protein is MEMO1 family protein MmarC6_1286.